The chain runs to 81 residues: Translational regulator CsrA (81 aa).

Residues 59–71 (SQMQHLEQGNFPT) show a composition bias toward polar residues. A disordered region spans residues 59–81 (SQMQHLEQGNFPTSFDDDDFFNR).

It belongs to the CsrA/RsmA family. Homodimer; the beta-strands of each monomer intercalate to form a hydrophobic core, while the alpha-helices form wings that extend away from the core.

The protein localises to the cytoplasm. In terms of biological role, a key translational regulator that binds mRNA to regulate translation initiation and/or mRNA stability. Mediates global changes in gene expression, shifting from rapid growth to stress survival by linking envelope stress, the stringent response and the catabolite repression systems. Usually binds in the 5'-UTR; binding at or near the Shine-Dalgarno sequence prevents ribosome-binding, repressing translation, binding elsewhere in the 5'-UTR can activate translation and/or stabilize the mRNA. Its function is antagonized by small RNA(s). The sequence is that of Translational regulator CsrA from Psychrobacter sp. (strain PRwf-1).